The primary structure comprises 713 residues: Fibroblast growth factor receptor 4 (713 aa).

Residues 1-20 (MLPLWLVLAGLLLAVGPAAS) form the signal peptide. The interval 21-54 (HRGEMEPDSLASGDDDEDSDGDGPHGDRSEEPVY) is disordered. Residues 21–281 (HRGEMEPDSL…AETSEAKYTD (261 aa)) are Extracellular-facing. A compositionally biased stretch (basic and acidic residues) spans 42–54 (DGPHGDRSEEPVY). 2 Ig-like C2-type domains span residues 59–152 (PYWT…YLLD) and 161–261 (PILQ…AWLT). A disulfide bond links Cys84 and Cys136. N-linked (GlcNAc...) asparagine glycans are attached at residues Asn133, Asn170, Asn202, Asn223, and Asn234. Residues Cys183 and Cys245 are joined by a disulfide bond. A helical membrane pass occupies residues 282–302 (IIIYTSGSLAVAMALIIVVLC). The Cytoplasmic portion of the chain corresponds to 303–713 (RMQTQSSKQP…CLFSCPSGRT (411 aa)). The Protein kinase domain occupies 379-667 (LVLGKPLGEG…ILAAISEEYL (289 aa)). Residues 385 to 393 (LGEGCFGQV) and Lys415 contribute to the ATP site. Asp524 functions as the Proton acceptor in the catalytic mechanism. Residues Tyr554, Tyr555, and Tyr666 each carry the phosphotyrosine; by autocatalysis modification.

The protein belongs to the protein kinase superfamily. Tyr protein kinase family. Fibroblast growth factor receptor subfamily. As to quaternary structure, monomer. Homodimer after ligand binding. Interacts with FGF1, FGF2, FGF4, FGF6, FGF8, FGF9, FGF16, FGF17, FGF18, FGF19, FGF21 and FGF23 (in vitro). Binding affinity for FGF family members is enhanced by interactions between FGFs and heparan sulfate proteoglycans. Interacts with KLB; this strongly increases the affinity for FGF19 and FGF23. Affinity for FGF19 is strongly increased by KLB and sulfated glycosaminoglycans. KLB and KL both interact with the core-glycosylated FGFR4 in the endoplasmic reticulum and promote its degradation, so that only FGFR4 with fully mature N-glycans is expressed at the cell surface. Identified in a complex with NCAM1, CDH2, PLCG1, FRS2, SRC, SHC1, GAP43 and CTTN. Interacts with MMP14 and HIP1. Interacts with STAT3. In terms of processing, N-glycosylated. Full maturation of the glycan chains in the Golgi is essential for high affinity interaction with FGF19. Post-translationally, ubiquitinated. Subject to proteasomal degradation when not fully glycosylated. Autophosphorylated. Binding of FGF family members together with heparan sulfate proteoglycan or heparin promotes receptor dimerization and autophosphorylation on tyrosine residues. Autophosphorylation occurs in trans between the two FGFR molecules present in the dimer.

Its subcellular location is the cell membrane. The protein resides in the endosome. It localises to the endoplasmic reticulum. The enzyme catalyses L-tyrosyl-[protein] + ATP = O-phospho-L-tyrosyl-[protein] + ADP + H(+). With respect to regulation, present in an inactive conformation in the absence of bound ligand. Ligand binding leads to dimerization and activation by autophosphorylation on tyrosine residues. Tyrosine-protein kinase that acts as a cell-surface receptor for fibroblast growth factors and plays a role in the regulation of cell proliferation, differentiation and migration, and in regulation of lipid metabolism, bile acid biosynthesis, glucose uptake, vitamin D metabolism and phosphate homeostasis. Required for normal down-regulation of the expression of CYP7A1, the rate-limiting enzyme in bile acid synthesis, in response to FGF19. Phosphorylates PLCG1 and FRS2. Ligand binding leads to the activation of several signaling cascades. Activation of PLCG1 leads to the production of the cellular signaling molecules diacylglycerol and inositol 1,4,5-trisphosphate. Phosphorylation of FRS2 triggers recruitment of GRB2, GAB1, PIK3R1 and SOS1, and mediates activation of RAS, MAPK1/ERK2, MAPK3/ERK1 and the MAP kinase signaling pathway, as well as of the AKT1 signaling pathway. Promotes SRC-dependent phosphorylation of the matrix protease MMP14 and its lysosomal degradation. FGFR4 signaling is down-regulated by receptor internalization and degradation; MMP14 promotes internalization and degradation of FGFR4. The chain is Fibroblast growth factor receptor 4 (FGFR4) from Coturnix coturnix (Common quail).